We begin with the raw amino-acid sequence, 319 residues long: Porphobilinogen deaminase 1 (319 aa).

At Cys244 the chain carries S-(dipyrrolylmethanemethyl)cysteine.

The protein belongs to the HMBS family. As to quaternary structure, monomer. The cofactor is dipyrromethane.

The enzyme catalyses 4 porphobilinogen + H2O = hydroxymethylbilane + 4 NH4(+). It functions in the pathway porphyrin-containing compound metabolism; protoporphyrin-IX biosynthesis; coproporphyrinogen-III from 5-aminolevulinate: step 2/4. Functionally, tetrapolymerization of the monopyrrole PBG into the hydroxymethylbilane pre-uroporphyrinogen in several discrete steps. This chain is Porphobilinogen deaminase 1 (hemC1), found in Streptomyces coelicolor (strain ATCC BAA-471 / A3(2) / M145).